Here is a 302-residue protein sequence, read N- to C-terminus: Glutaminase (302 aa).

Substrate contacts are provided by S61, N111, E155, N162, Y186, Y238, and V256.

This sequence belongs to the glutaminase family. In terms of assembly, homotetramer.

It catalyses the reaction L-glutamine + H2O = L-glutamate + NH4(+). This chain is Glutaminase, found in Pseudomonas fluorescens (strain Pf0-1).